Reading from the N-terminus, the 441-residue chain is Baicalein 7-O-glucuronosyltransferase (441 aa).

It belongs to the UDP-glycosyltransferase family. As to quaternary structure, homodimer.

It catalyses the reaction baicalein + UDP-alpha-D-glucuronate = baicalin + UDP. Inhibited by copper, zinc and iron, p-Chloromercuri-benzoic acid (PCMBA) and 4,4'-diisothiocyanostilbene-2,2'-disulfonic acid (DIDS), but not by N-ethylmaleimide (NEM), dithioerythritol (DTE), calcium or magnesium. Functionally, involved in the production of glucuronosylated baicalein, a flavonoid that shows antiallergic, anti-HIV and antitumor activities. Can use baicalein, scutellarein and wogonin as substrates, but not chrysin, apigenin, luteolin, quercetin, formononetin and daidzein. Highly specific for UDP-glucuronate (UDP-GlcUA) and no activity with UDP-glucose or UDP-galacturonic acid. The polypeptide is Baicalein 7-O-glucuronosyltransferase (UBGAT-I) (Scutellaria baicalensis (Baical skullcap)).